Here is a 633-residue protein sequence, read N- to C-terminus: Probable potassium transport system protein Kup 3 (633 aa).

11 helical membrane-spanning segments follow: residues 61–81 (LVSLVLWTLTAIVTIKYVLFL), 107–127 (PVLMFFAGVLGAALFIGDAMI), 143–163 (VAPALHDYVLPISVVIILLLF), 173–193 (VSVFFGPITLVWFLVMAAAGV), 211–231 (AIGFLWNAGLIGFIVLGAIFL), 255–275 (WFAVVFPALALNYLGQGALVL), 287–307 (LMFPNWALLPMVILATAGTII), 345–365 (IYLPLVNTILLTGVLALMLMF), 371–391 (LAPAYGVSITGAMVIDTILAF), 402–422 (ALTAIAVLLPLFSLELIFLGA), and 427–447 (IHHGGYVPILIAGTLIMMMWT).

This sequence belongs to the HAK/KUP transporter (TC 2.A.72) family.

The protein resides in the cell inner membrane. The enzyme catalyses K(+)(in) + H(+)(in) = K(+)(out) + H(+)(out). Functionally, transport of potassium into the cell. Likely operates as a K(+):H(+) symporter. The polypeptide is Probable potassium transport system protein Kup 3 (Sinorhizobium medicae (strain WSM419) (Ensifer medicae)).